Here is a 354-residue protein sequence, read N- to C-terminus: Kelch domain-containing protein 8B (354 aa).

8 Kelch repeats span residues 1 to 31 (MAAG…HQDG), 32 to 79 (HLLV…VLGK), 81 to 127 (VLVV…ERDG), 128 to 175 (MVYA…LHGN), 176 to 222 (KIYV…MAEG), 224 to 281 (VFSL…SLGG), 282 to 329 (NIVA…QAGP), and 331 to 354 (LFVI…RDGV).

Its subcellular location is the cytoplasm. It is found in the midbody. In terms of biological role, involved in pinching off the separated nuclei at the cleavage furrow and in cytokinesis. Required for mitotic integrity and maintenance of chromosomal stability. Protects cells against mitotic errors, centrosomal amplification, micronucleus formation and aneuploidy. Plays a key role of midbody function involving abscission of the daughter cells during cytokinesis and appropriate chromosomal and nuclear segregation into the daughter cells. This chain is Kelch domain-containing protein 8B (Klhdc8b), found in Rattus norvegicus (Rat).